Consider the following 361-residue polypeptide: Putative agmatine deiminase (361 aa).

The active-site Amidino-cysteine intermediate is the cysteine 354.

The protein belongs to the agmatine deiminase family.

The enzyme catalyses agmatine + H2O = N-carbamoylputrescine + NH4(+). This chain is Putative agmatine deiminase, found in Streptococcus pneumoniae (strain ATCC 700669 / Spain 23F-1).